The chain runs to 101 residues: Feather keratin Cos1-1/Cos1-3/Cos2-1 (101 aa).

S2 carries the post-translational modification N-acetylserine.

It belongs to the avian keratin family. As to quaternary structure, the avian keratins (F-ker, S-ker, C-ker and B-ker) are a complex mixture of very similar polypeptides.

The polypeptide is Feather keratin Cos1-1/Cos1-3/Cos2-1 (Columba livia (Rock dove)).